The following is a 161-amino-acid chain: 3-isopropylmalate dehydratase small subunit (161 aa).

Belongs to the LeuD family. LeuD type 2 subfamily. In terms of assembly, heterodimer of LeuC and LeuD.

It catalyses the reaction (2R,3S)-3-isopropylmalate = (2S)-2-isopropylmalate. It participates in amino-acid biosynthesis; L-leucine biosynthesis; L-leucine from 3-methyl-2-oxobutanoate: step 2/4. In terms of biological role, catalyzes the isomerization between 2-isopropylmalate and 3-isopropylmalate, via the formation of 2-isopropylmaleate. In Sulfolobus acidocaldarius (strain ATCC 33909 / DSM 639 / JCM 8929 / NBRC 15157 / NCIMB 11770), this protein is 3-isopropylmalate dehydratase small subunit.